The following is a 428-amino-acid chain: Glutamate-1-semialdehyde 2,1-aminomutase (428 aa).

Lysine 265 is subject to N6-(pyridoxal phosphate)lysine.

It belongs to the class-III pyridoxal-phosphate-dependent aminotransferase family. HemL subfamily. As to quaternary structure, homodimer. The cofactor is pyridoxal 5'-phosphate.

The protein localises to the cytoplasm. It carries out the reaction (S)-4-amino-5-oxopentanoate = 5-aminolevulinate. Its pathway is porphyrin-containing compound metabolism; protoporphyrin-IX biosynthesis; 5-aminolevulinate from L-glutamyl-tRNA(Glu): step 2/2. The chain is Glutamate-1-semialdehyde 2,1-aminomutase from Proteus mirabilis (strain HI4320).